Here is a 914-residue protein sequence, read N- to C-terminus: Thyroid peroxidase (914 aa).

Residues 1–31 (MRTLGAMAIMLVVMGTVIFLSFILRSRDILC) form the signal peptide. Topologically, residues 32–834 (GKTMKSHVIS…TCIDSGRLPR (803 aa)) are extracellular. An N-linked (GlcNAc...) asparagine glycan is attached at N123. Cysteines 136 and 152 form a disulfide. D232 is a binding site for heme b. Residue H233 is the Proton acceptor of the active site. D234 lines the Ca(2+) pocket. Intrachain disulfides connect C253–C263 and C257–C278. 2 N-linked (GlcNAc...) asparagine glycosylation sites follow: N271 and N299. Ca(2+) is bound by residues T313, F315, D317, and S319. N-linked (GlcNAc...) asparagine glycosylation occurs at N334. The heme b site is built by E387 and H482. Cystine bridges form between C586/C643, C684/C709, C730/C770, C756/C782, C788/C802, C796/C811, and C813/C826. N-linked (GlcNAc...) asparagine glycosylation is present at N603. A Sushi domain is found at 728–783 (DKCVFPEEVDNGNFVHCEESGKLVLVYSCFHGYKLQGQEQVTCTQKGWDSEPPVCK). The EGF-like; calcium-binding domain occupies 784–827 (DVNECADLTHPPCHPSAQCKNTKGSFQCVCTDPYVLGEDEKTCI). The helical transmembrane segment at 835–859 (ASWVSIALGALLIGGLASLTWIVIC) threads the bilayer. The Cytoplasmic portion of the chain corresponds to 860-914 (RWTHADKKATLPITERVTTQSGCRKSQGRGISPHKAAAQDTGQEPASGSRVLLCE). The segment at 881–909 (GCRKSQGRGISPHKAAAQDTGQEPASGSR) is disordered.

The protein belongs to the peroxidase family. XPO subfamily. As to quaternary structure, interacts with DUOX1, DUOX2 and CYBA. It depends on Ca(2+) as a cofactor. Requires heme b as cofactor. In terms of processing, heme is covalently bound through a H(2)O(2)-dependent autocatalytic process. Heme insertion is important for the delivery of protein at the cell surface. Cleaved in its N-terminal part.

Its subcellular location is the membrane. It catalyses the reaction 2 iodide + H2O2 + 2 H(+) = diiodine + 2 H2O. The enzyme catalyses [thyroglobulin]-L-tyrosine + iodide + H2O2 + H(+) = [thyroglobulin]-3-iodo-L-tyrosine + 2 H2O. It carries out the reaction [thyroglobulin]-3-iodo-L-tyrosine + iodide + H2O2 + H(+) = [thyroglobulin]-3,5-diiodo-L-tyrosine + 2 H2O. The catalysed reaction is 2 [thyroglobulin]-3,5-diiodo-L-tyrosine + H2O2 = [thyroglobulin]-L-thyroxine + [thyroglobulin]-dehydroalanine + 2 H2O. It catalyses the reaction [thyroglobulin]-3-iodo-L-tyrosine + [thyroglobulin]-3,5-diiodo-L-tyrosine + H2O2 = [thyroglobulin]-3,3',5-triiodo-L-thyronine + [thyroglobulin]-dehydroalanine + 2 H2O. Its pathway is hormone biosynthesis; thyroid hormone biosynthesis. In terms of biological role, iodination and coupling of the hormonogenic tyrosines in thyroglobulin to yield the thyroid hormones T(3) and T(4). The chain is Thyroid peroxidase (Tpo) from Mus musculus (Mouse).